The following is a 92-amino-acid chain: Small ribosomal subunit protein bS20 (92 aa).

This sequence belongs to the bacterial ribosomal protein bS20 family.

Functionally, binds directly to 16S ribosomal RNA. In Thermosipho africanus (strain TCF52B), this protein is Small ribosomal subunit protein bS20.